A 632-amino-acid chain; its full sequence is Chaperone protein HtpG (632 aa).

An a; substrate-binding region spans residues 1-345 (MTTAAHAETL…SKDLSLNVSR (345 aa)). The b stretch occupies residues 346–561 (ELLQKDPQVD…EHDMGYQMRR (216 aa)). The segment at 562–632 (LMEAAGQPLP…VQRLNKLLSH (71 aa)) is c.

Belongs to the heat shock protein 90 family. As to quaternary structure, homodimer.

It localises to the cytoplasm. Its function is as follows. Molecular chaperone. Has ATPase activity. The sequence is that of Chaperone protein HtpG from Chromohalobacter salexigens (strain ATCC BAA-138 / DSM 3043 / CIP 106854 / NCIMB 13768 / 1H11).